Consider the following 93-residue polypeptide: Small ribosomal subunit protein uS17 (93 aa).

It belongs to the universal ribosomal protein uS17 family. As to quaternary structure, part of the 30S ribosomal subunit.

One of the primary rRNA binding proteins, it binds specifically to the 5'-end of 16S ribosomal RNA. In Rhodococcus jostii (strain RHA1), this protein is Small ribosomal subunit protein uS17.